We begin with the raw amino-acid sequence, 338 residues long: Glyceraldehyde-3-phosphate dehydrogenase (338 aa).

NAD(+) contacts are provided by residues 11-12 (TI) and G109. 138-140 (SCN) is a binding site for D-glyceraldehyde 3-phosphate. The Nucleophile role is filled by C139. An NAD(+)-binding site is contributed by R167. Residues T169 and 192–193 (HA) each bind D-glyceraldehyde 3-phosphate. Position 299 (Q299) interacts with NAD(+).

This sequence belongs to the glyceraldehyde-3-phosphate dehydrogenase family. In terms of assembly, homotetramer.

It is found in the cytoplasm. It carries out the reaction D-glyceraldehyde 3-phosphate + phosphate + NADP(+) = (2R)-3-phospho-glyceroyl phosphate + NADPH + H(+). It catalyses the reaction D-glyceraldehyde 3-phosphate + phosphate + NAD(+) = (2R)-3-phospho-glyceroyl phosphate + NADH + H(+). It participates in carbohydrate degradation; glycolysis; pyruvate from D-glyceraldehyde 3-phosphate: step 1/5. The polypeptide is Glyceraldehyde-3-phosphate dehydrogenase (Thermoplasma volcanium (strain ATCC 51530 / DSM 4299 / JCM 9571 / NBRC 15438 / GSS1)).